The chain runs to 773 residues: Photosystem I P700 chlorophyll a apoprotein A1 (773 aa).

A disordered region spans residues 1-27; sequence MTISPPERGEKAKGAAPTPYDQPVDRD. The next 8 helical transmembrane spans lie at 80–103, 166–189, 205–229, 315–333, 375–398, 414–440, 462–484, and 564–582; these read IFSA…FHGA, LMAL…YHYH, LQHH…HIGA, ISHH…GHMW, WHGQ…HHMY, LGLF…IAMI, AIIS…LYIH, and LMIH…LILL. 2 residues coordinate [4Fe-4S] cluster: C606 and C615. The next 2 membrane-spanning stretches (helical) occupy residues 622–643 and 687–709; these read HVFL…HFSW and ISMY…MFLF. Divinylchlorophyll a' is bound at residue H698. The divinyl chlorophyll a site is built by M706 and Y714. Residue W715 participates in phylloquinone binding. The helical transmembrane segment at 747–767 threads the bilayer; it reads AVGVAHFLLGGIATTWAFFHA.

Belongs to the PsaA/PsaB family. In terms of assembly, the PsaA/B heterodimer binds the P700 divinyl chlorophyll special pair and subsequent electron acceptors. PSI consists of a core antenna complex that captures photons, and an electron transfer chain that converts photonic excitation into a charge separation. The cyanobacterial PSI reaction center is composed of one copy each of PsaA,B,C,D,E,F,I,J,K,L,M and X, and forms trimeric complexes. PSI electron transfer chain: 5 divinyl chlorophyll a, 1 divinyl chlorophyll a', 2 phylloquinones and 3 4Fe-4S clusters. PSI core antenna: 90 divinyl chlorophyll a, 22 carotenoids, 3 phospholipids and 1 galactolipid. P700 is a divinyl chlorophyll a/divinyl chlorophyll a' dimer, A0 is one or more divinylchlorophyll a, A1 is one or both phylloquinones and FX is a shared 4Fe-4S iron-sulfur center. serves as cofactor.

It localises to the cellular thylakoid membrane. It carries out the reaction reduced [plastocyanin] + hnu + oxidized [2Fe-2S]-[ferredoxin] = oxidized [plastocyanin] + reduced [2Fe-2S]-[ferredoxin]. In terms of biological role, psaA and PsaB bind P700, the primary electron donor of photosystem I (PSI), as well as the electron acceptors A0, A1 and FX. PSI is a plastocyanin/cytochrome c6-ferredoxin oxidoreductase, converting photonic excitation into a charge separation, which transfers an electron from the donor P700 chlorophyll pair to the spectroscopically characterized acceptors A0, A1, FX, FA and FB in turn. Oxidized P700 is reduced on the lumenal side of the thylakoid membrane by plastocyanin or cytochrome c6. This Prochlorococcus marinus (strain SARG / CCMP1375 / SS120) protein is Photosystem I P700 chlorophyll a apoprotein A1.